Here is a 4684-residue protein sequence, read N- to C-terminus: Plectin (4684 aa).

A globular 1 region spans residues 1 to 1470 (MVAGMLMPRD…SELTTLTSQY (1470 aa)). Residues Phe20 and Arg21 each carry the phosphoserine modification. A Phosphotyrosine modification is found at Val26. The residue at position 42 (Gly42) is a Phosphoserine. A Phosphothreonine modification is found at Thr113. Ser125 and Ser149 each carry phosphoserine. Residues 144-179 (ELEEVSPETPVVPATTQRTLARPGPEPAPATDERDR) form a disordered region. The segment at 175 to 400 (DERDRVQKKT…YVSSLYDAMP (226 aa)) is actin-binding. Calponin-homology (CH) domains are found at residues 179-282 (RVQK…LHFQ) and 295-400 (MTAK…DAMP). One copy of the Spectrin 1 repeat lies at 645-710 (LQSVQRRPEL…SIEEFRAKIE (66 aa)). Residue Ser720 is modified to Phosphoserine. Spectrin repeat units follow at residues 740–824 (KLLN…REDH) and 837–930 (LQTQ…AVVQ). One can recognise an SH3 domain in the interval 941 to 998 (RGRLPLLAVCDYKQVEVTVHKGDECQLVGPAQPSHWKVLSSSGSEAAVPSVCFLVPPP). The interval 964 to 4574 (ECQLVGPAQP…VGAYSKYLTC (3611 aa)) is required for interaction with intermediate filament proteins. Ser1047 is modified (phosphoserine). The Spectrin 4 repeat unit spans residues 1315–1415 (RERVAQLLER…QRFAKQYINA (101 aa)). Ser1435 bears the Phosphoserine mark. The stretch at 1469–2756 (QYIKFISETL…AHSEEVTASQ (1288 aa)) forms a coiled coil. Residues 1471 to 2755 (IKFISETLRR…LAHSEEVTAS (1285 aa)) form a central fibrous rod domain region. The tract at residues 1618–1650 (RAEEAEAQKRQAQEEAERLRRQVQDESQRKRQA) is disordered. Ser1721 carries the post-translational modification Phosphoserine. Lys1725 carries the N6-acetyllysine modification. Position 1732 is a phosphoserine (Ser1732). Disordered stretches follow at residues 1794 to 1836 (LAQA…KQRQ), 2105 to 2139 (EAARQRQLAAEEERRRREAEERVQKSLAAEEEAAR), and 2217 to 2307 (RGEA…MEKH). Basic and acidic residues-rich tracts occupy residues 1798 to 1836 (EAEKQKEEAEREARRRGKAEEQAVRQRELAEQELEKQRQ), 2105 to 2128 (EAARQRQLAAEEERRRREAEERVQ), and 2217 to 2258 (RGEA…KQSA). Residues 2259–2272 (EEQAQARAQAQAAA) show a composition bias toward low complexity. Residues 2273-2288 (EKLRKEAEQEAARRAQ) show a composition bias toward basic and acidic residues. Residue Ser2631 is modified to Phosphoserine. At Lys2636 the chain carries N6-acetyllysine. Disordered stretches follow at residues 2668-2707 (REEQQRQQQQMEQERQRLVASMEEARRRQHEAEEGVRRKQ) and 2763-2784 (LPNGRDALDGPAAEAEPEHSFD). The span at 2679-2707 (EQERQRLVASMEEARRRQHEAEEGVRRKQ) shows a compositional bias: basic and acidic residues. Residues 2756 to 4684 (QVAATKTLPN…SLGGPESAVA (1929 aa)) are globular 2. Residues Ser2782 and Ser2802 each carry the phosphoserine modification. Plectin repeat units lie at residues 2826-2863 (RHYLQGRSSIAGLLLKATNEKLSVYAALQRQLLSPGTA), 2864-2901 (LILLEAQAASGFLLDPVRNRRLTVNEAVKEGVVGPELH), 2902-2939 (HKLLSAERAVTGYKDPYTGQQISLFQAMQKGLIVREHG), 2940-2977 (IRLLEAQIATGGVIDPVHSHRVPVDVAYRRGYFDEEMN), and 2981-3015 (ADPSDDTKGFFDPNTHENLTYLQLLERCVEDPETG). Thr2886 carries the phosphothreonine modification. Residue Tyr3033 is modified to Phosphotyrosine. Ser3036 bears the Phosphoserine mark. Residues Lys3053 and Lys3091 each carry the N6-acetyllysine modification. Plectin repeat units lie at residues 3116–3153 (SLVPAAELLESRVIDRELYQQLQRGERSVRDVAEVDTV), 3154–3191 (RRALRGANVIAGVWLEEAGQKLSIYNALKKDLLPSDMA), 3192–3229 (VALLEAQAGTGHIIDPATSARLTVDEAVRAGLVGPEFH), 3230–3267 (EKLLSAEKAVTGYRDPYTGQSVSLFQALKKGLIPREQG), 3268–3305 (LRLLDAQLSTGGIVDPSKSHRVPLDVACARGCLDEETS), and 3306–3343 (RALSAPRADAKAYSDPSTGEPATYGELQQRCRPDQLTG). The interval 3310 to 3331 (APRADAKAYSDPSTGEPATYGE) is disordered. The residue at position 3362 (Tyr3362) is a Phosphotyrosine. Lys3420 carries the N6-acetyllysine modification. Plectin repeat units lie at residues 3485–3522 (RTLLQGSGCLAGIYLEDTKEKVSIYEAMRRGLLRATTA), 3523–3560 (ALLLEAQAATGFLVDPVRNQRLYVHEAVKAGVVGPELH), 3561–3598 (EQLLSAEKAVTGYRDPYSGSTISLFQAMQKGLVLRQHG), 3599–3636 (IRLLEAQIATGGIIDPVHSHRVPVDVAYQRGYFSEEMN), and 3640–3674 (ADPSDDTKGFFDPNTHENLTYRQLLERCVEDPETG). Ser3580 carries the phosphoserine modification. At Thr3785 the chain carries Phosphothreonine. Plectin repeat units follow at residues 3820–3857 (WCYLYGTGSVAGVYLPGSRQTLSIYQALKKGLLSAEVA), 3858–3895 (RLLLEAQAATGFLLDPVKGERLTVDEAVRKGLVGPELH), 3896–3933 (DRLLSAERAVTGYRDPYTEQTISLFQAMKKELIPTEEA), 3934–3971 (LRLLDAQLATGGIVDPRLGFHLPLEVAYQRGYLNKDTH), and 3975–4008 (SEPSEVRSYVDPSTDERLSYTQLLRRCRRDDGTG). Residues 3956 to 4293 (PLEVAYQRGY…ETGKEMSVYE (338 aa)) are required for interaction with type2 keratins, DES and VIM. Phosphothreonine is present on Thr4030. At Ser4054 the chain carries Phosphoserine. Plectin repeat units follow at residues 4063–4100 (QKFLEGTSCIAGVFVDATKERLSVYQAMKKGIIRPGTA), 4101–4138 (FELLEAQAATGYVIDPIKGLKLTVEEAVRMGIVGPEFK), 4139–4176 (DKLLSAERAVTGYKDPYSGKLISLFQAMKKGLILKDHG), 4177–4214 (IRLLEAQIATGGIIDPEESHRLPVEVAYKRGLFDEEMN), 4218–4252 (TDPSDDTKGFFDPNTEENLTYLQLMERCITDPQTG), 4265–4305 (RKTS…HQTY), and 4319–4356 (TISSSDGVVKSMIIDRRSGRQYDIDDAIAKNLIDRSAL). Residues 4250–4300 (QTGLCLLPLKEKKRERKTSSKSSVRKRRVVIVDPETGKEMSVYEAYRKGLI) form a binding to intermediate filaments region. Ser4382, Ser4384, Ser4385, Ser4386, Ser4389, Ser4390, Ser4391, and Ser4392 each carry phosphoserine. The residue at position 4393 (Tyr4393) is a Phosphotyrosine. Phosphoserine occurs at positions 4396, 4400, and 4406. 5 Plectin repeats span residues 4408–4445 (SDPTEETGPVAGILDTETLEKVSITEAMHRNLVDNITG), 4446–4483 (QRLLEAQACTGGIIDPSTGERFPVTDAVNKGLVDKIMV), 4484–4521 (DRINLAQKAFCGFEDPRTKTKMSAAQALKKGWLYYEAG), 4522–4559 (QRFLEVQYLTGGLIEPDTPGRVPLDEALQRGTVDARTA), and 4560–4597 (QKLRDVGAYSKYLTCPKTKLKISYKDALDRSMVEEGTG). A Phosphothreonine modification is found at Thr4411. Positions 4505–4574 (MSAAQALKKG…VGAYSKYLTC (70 aa)) are required for efficient interaction with KRT5 and KRT14 heterodimers. At Thr4539 the chain carries Phosphothreonine; by CDK1. Residues Ser4607 and Ser4613 each carry the phosphoserine modification. Positions 4611–4678 (YYSPYSVSGS…ASGSSASLGG (68 aa)) are enriched in low complexity. A disordered region spans residues 4611 to 4684 (YYSPYSVSGS…SLGGPESAVA (74 aa)). Tyr4615 is modified (phosphotyrosine). Phosphoserine is present on residues Ser4616, Ser4618, and Ser4622. Thr4623 is subject to Phosphothreonine. The tract at residues 4625–4640 (GSRTGSRTGSRAGSRR) is 4 X 4 AA tandem repeats of G-S-R-X. Residue Ser4626 is modified to Phosphoserine. Residues Arg4627 and Arg4640 each carry the omega-N-methylarginine modification. Phosphoserine is present on residues Ser4642, Ser4672, and Ser4675.

It belongs to the plakin or cytolinker family. As to quaternary structure, homodimer or homotetramer. Interacts (via actin-binding domain) with SYNE3. Interacts (via calponin-homology (CH) 1 domain) with VIM (via rod region). Interacts (via N-terminus) with DST isoform 2 (via N-terminus). Interacts with FER. Interacts with TOR1A. Interacts with ANK3. Identified in complexes that contain VIM, EZR, AHNAK, BFSP1, BFSP2, ANK2, PLEC, PRX and spectrin. Interacts with COL17A1. Interacts with KRT14, heterodimers consisting of KRT8 and KRT18, heterodimers consisting of KRT5 and KRT14, heterodimers consisting of KRT14 and KRT15, and heterodimers consisting of KRT1 and KRT10. Interacts with DES and VIM. Phosphorylated by CDK1; regulates dissociation from intermediate filaments during mitosis. As to expression, widely expressed with highest levels in muscle, heart, placenta and spinal cord.

Its subcellular location is the cytoplasm. The protein localises to the cytoskeleton. It localises to the cell junction. The protein resides in the hemidesmosome. It is found in the cell projection. Its subcellular location is the podosome. Interlinks intermediate filaments with microtubules and microfilaments and anchors intermediate filaments to desmosomes or hemidesmosomes. Could also bind muscle proteins such as actin to membrane complexes in muscle. May be involved not only in the filaments network, but also in the regulation of their dynamics. Structural component of muscle. Isoform 9 plays a major role in the maintenance of myofiber integrity. The chain is Plectin (PLEC) from Homo sapiens (Human).